A 213-amino-acid polypeptide reads, in one-letter code: Orotate phosphoribosyltransferase (213 aa).

Lysine 26 is a 5-phospho-alpha-D-ribose 1-diphosphate binding site. 34–35 is a binding site for orotate; sequence FF. Residues 72–73, arginine 99, lysine 100, lysine 103, histidine 105, and 124–132 contribute to the 5-phospho-alpha-D-ribose 1-diphosphate site; these read YK and DDVITAGTA. Orotate contacts are provided by threonine 128 and arginine 156.

This sequence belongs to the purine/pyrimidine phosphoribosyltransferase family. PyrE subfamily. As to quaternary structure, homodimer. Mg(2+) is required as a cofactor.

It carries out the reaction orotidine 5'-phosphate + diphosphate = orotate + 5-phospho-alpha-D-ribose 1-diphosphate. It participates in pyrimidine metabolism; UMP biosynthesis via de novo pathway; UMP from orotate: step 1/2. Catalyzes the transfer of a ribosyl phosphate group from 5-phosphoribose 1-diphosphate to orotate, leading to the formation of orotidine monophosphate (OMP). In Klebsiella pneumoniae (strain 342), this protein is Orotate phosphoribosyltransferase.